The sequence spans 600 residues: Malto-oligosyltrehalose trehalohydrolase (600 aa).

Residues 1–34 (MTQTQPVTPTPPASFQTQHDPRTRLGATPLPGGA) are disordered. 273–278 (RLDATP) contacts substrate. The active-site Nucleophile is aspartate 275. Glutamate 308 serves as the catalytic Proton donor. Residues 328 to 332 (DDFHH), glutamate 376, and 399 to 404 (HDQIGN) contribute to the substrate site.

It belongs to the glycosyl hydrolase 13 family. In terms of assembly, monomer.

It is found in the cytoplasm. The enzyme catalyses hydrolysis of (1-&gt;4)-alpha-D-glucosidic linkage in 4-alpha-D-[(1-&gt;4)-alpha-D-glucanosyl]n trehalose to yield trehalose and (1-&gt;4)-alpha-D-glucan.. The protein operates within glycan biosynthesis; trehalose biosynthesis. The chain is Malto-oligosyltrehalose trehalohydrolase (treZ) from Deinococcus radiodurans (strain ATCC 13939 / DSM 20539 / JCM 16871 / CCUG 27074 / LMG 4051 / NBRC 15346 / NCIMB 9279 / VKM B-1422 / R1).